Reading from the N-terminus, the 410-residue chain is Peptidase T (410 aa).

Histidine 79 serves as a coordination point for Zn(2+). The active site involves aspartate 81. Aspartate 142 is a binding site for Zn(2+). The active-site Proton acceptor is the glutamate 176. Zn(2+) contacts are provided by glutamate 177, aspartate 199, and histidine 381.

Belongs to the peptidase M20B family. Zn(2+) serves as cofactor.

It localises to the cytoplasm. It carries out the reaction Release of the N-terminal residue from a tripeptide.. In terms of biological role, cleaves the N-terminal amino acid of tripeptides. This Listeria innocua serovar 6a (strain ATCC BAA-680 / CLIP 11262) protein is Peptidase T.